The sequence spans 526 residues: Cytochrome P450 monooxygenase BOT4 (526 aa).

N-linked (GlcNAc...) asparagine glycosylation occurs at N5. A helical membrane pass occupies residues 41–61 (CLVAIILCRFIAVWSYNLWFH). N-linked (GlcNAc...) asparagine glycans are attached at residues N205 and N281. A heme-binding site is contributed by C464.

The protein belongs to the cytochrome P450 family. Heme is required as a cofactor.

Its subcellular location is the membrane. It participates in secondary metabolite biosynthesis. Functionally, cytochrome P450 monooxygenase; part of the gene cluster that mediates the biosynthesis of botrydial. Botrydial is necessary for colonization of plant tissue by the T4 strain. It is a strain-dependent virulence factor since highly aggressive strains like SAS56 or B05 still retain substantial virulence when botrydial synthesis is impaired, since they produce also botcinic acid. The first step of botrydial biosynthesis is performed by the sesquiterpene synthase BOT2 which catalyzes the cyclization of farnesyl diphosphate (FPP) to presilphiperfolan-8-beta-ol (PSP). The cytochrome P450 monooxygenase BOT4 then catalyzes the hydroxylation at C-4 to give a probotryane intermediate. Acetylation of the hydroxyl at C-4 is carried out by the acetyltransferase BOT5, followed by the combined action of the P450 monooxygenases BOT3 and BOT1, to yield finally the glycol, via the regio- and stereospecific hydroxylations at C-10 and C-15 of the probotryane intermediates, respectively. The cleavage of the C10-C15 bond of probotryane skeleton is an intriguing and chemically important reaction, which could be mediated by some of the monooxygenases or by a combination of them. It is possible that either BOT3 or BOT1 would oxidize either the 10- or the 15-hydroxy group to the hydroperoxide derivative, which would then undergo heterolytic fragmentation to give the dialdehyde botrydial. Finally, the dehydrogenase BOT7 might be involved in the conversion of botrydial to dihydrobotrydial. This Botryotinia fuckeliana (Noble rot fungus) protein is Cytochrome P450 monooxygenase BOT4.